Here is an 82-residue protein sequence, read N- to C-terminus: Putative defensin-like protein 48 (82 aa).

The N-terminal stretch at 1 to 28 (MGIKTLIIFFHIFILAVLSSNNIILTSG) is a signal peptide. Cystine bridges form between Cys39–Cys80, Cys43–Cys67, Cys53–Cys78, and Cys57–Cys79.

It belongs to the DEFL family.

It is found in the secreted. This Arabidopsis thaliana (Mouse-ear cress) protein is Putative defensin-like protein 48.